We begin with the raw amino-acid sequence, 727 residues long: NADH-ubiquinone oxidoreductase 75 kDa subunit, mitochondrial (727 aa).

A mitochondrion-targeting transit peptide spans 1–23 (MLRIPVRKALVVLSKSPKGCVRT). One can recognise a 2Fe-2S ferredoxin-type domain in the interval 30–108 (NLIEVFVDGQ…GWNILTNSKK (79 aa)). Residues cysteine 64, cysteine 75, and cysteine 78 each contribute to the [2Fe-2S] cluster site. N6-acetyllysine is present on lysine 84. Cysteine 92 contributes to the [2Fe-2S] cluster binding site. A 4Fe-4S His(Cys)3-ligated-type domain is found at 108–147 (KSKKAREGVMEFLLANHPLDCPICDQGGECDLQDQSMMFG). Residues histidine 124, cysteine 128, cysteine 131, cysteine 137, cysteine 176, cysteine 179, cysteine 182, and cysteine 226 each contribute to the [4Fe-4S] cluster site. Residues 245-301 (TRKTESIDVMDAVGSNIVVSTRTGEVMRILPRMHEDINEEWISDKTRFAYDGLKRQR) form the 4Fe-4S Mo/W bis-MGD-type domain. Lysine 467, lysine 499, and lysine 709 each carry N6-acetyllysine.

It belongs to the complex I 75 kDa subunit family. Core subunit of respiratory chain NADH dehydrogenase (Complex I) which is composed of 45 different subunits. This is the largest subunit of complex I and it is a component of the iron-sulfur (IP) fragment of the enzyme. Complex I associates with ubiquinol-cytochrome reductase complex (Complex III) to form supercomplexes. Interacts with MDM2 and AKAP1. It depends on [2Fe-2S] cluster as a cofactor. The cofactor is [4Fe-4S] cluster.

The protein localises to the mitochondrion inner membrane. It catalyses the reaction a ubiquinone + NADH + 5 H(+)(in) = a ubiquinol + NAD(+) + 4 H(+)(out). Core subunit of the mitochondrial membrane respiratory chain NADH dehydrogenase (Complex I) which catalyzes electron transfer from NADH through the respiratory chain, using ubiquinone as an electron acceptor. Essential for catalysing the entry and efficient transfer of electrons within complex I. Plays a key role in the assembly and stability of complex I and participates in the association of complex I with ubiquinol-cytochrome reductase complex (Complex III) to form supercomplexes. This is NADH-ubiquinone oxidoreductase 75 kDa subunit, mitochondrial (NDUFS1) from Pan troglodytes (Chimpanzee).